Reading from the N-terminus, the 299-residue chain is Probable lipid kinase YegS (299 aa).

Positions 2–133 constitute a DAGKc domain; sequence ANFPASLLIL…IDMARVNDKT (132 aa). Residues T40, 66 to 72, and T95 each bind ATP; that span reads GDGTINE. Mg(2+) contacts are provided by L215, D218, and L220. The active-site Proton acceptor is the E271.

Belongs to the diacylglycerol/lipid kinase family. YegS lipid kinase subfamily. Mg(2+) is required as a cofactor. It depends on Ca(2+) as a cofactor.

It localises to the cytoplasm. Its function is as follows. Probably phosphorylates lipids; the in vivo substrate is unknown. This Salmonella agona (strain SL483) protein is Probable lipid kinase YegS.